The chain runs to 75 residues: Conotoxin Vc6a (75 aa).

Residues 1–22 (MKLTCVVIVAVLFLTANTFATA) form the signal peptide. Residues 23 to 49 (DDPRNGLENLFLKAHHEMNPEASKLNE) constitute a propeptide that is removed on maturation. Intrachain disulfides connect Cys51–Cys66, Cys58–Cys69, and Cys65–Cys74.

As to expression, expressed by the venom duct.

The protein localises to the secreted. In Conus victoriae (Queen Victoria cone), this protein is Conotoxin Vc6a.